The following is a 122-amino-acid chain: Large ribosomal subunit protein bL17 (122 aa).

It belongs to the bacterial ribosomal protein bL17 family. Part of the 50S ribosomal subunit. Contacts protein L32.

The polypeptide is Large ribosomal subunit protein bL17 (Nautilia profundicola (strain ATCC BAA-1463 / DSM 18972 / AmH)).